We begin with the raw amino-acid sequence, 28 residues long: Trypsin inhibitor 2 (28 aa).

Intrachain disulfides connect Cys-3–Cys-20, Cys-10–Cys-22, and Cys-16–Cys-27.

It belongs to the protease inhibitor I7 (squash-type serine protease inhibitor) family.

It is found in the secreted. In terms of biological role, inhibits trypsin. This is Trypsin inhibitor 2 from Momordica charantia (Bitter gourd).